We begin with the raw amino-acid sequence, 312 residues long: G-protein coupled receptor BILF1 (312 aa).

The Extracellular segment spans residues 1–40 (MLSTMAPGSTVGTLVANMTSVNATEDACTKSYSAFLSGMT). Disulfide bonds link Cys-28–Cys-258 and Cys-97–Cys-174. Residues 41–61 (SLLLVLLILLTLAGILFIIFV) traverse the membrane as a helical segment. At 62–67 (RKLVHR) the chain is on the cytoplasmic side. Residues 68–88 (MDVWLIALLIELLLWVLGKMI) form a helical membrane-spanning segment. Topologically, residues 89-95 (QEFSSTG) are extracellular. The helical transmembrane segment at 96-116 (LCLLTQNMMFLGLMCSVWTHL) threads the bilayer. Topologically, residues 117–138 (GMALEKTLALFSRTPKRTSHRN) are cytoplasmic. Residues 139–159 (VCLYLMGVFCLVLLLIIILLI) form a helical membrane-spanning segment. Residues 160–192 (TMGPDANLNRGPNMCREGPTKGMHTAVQGLKAG) lie on the Extracellular side of the membrane. A helical transmembrane segment spans residues 193-213 (CYLLAAVLIVLLTVIIIWKLL). Topologically, residues 214 to 228 (RTKFGRKPRLICNVT) are cytoplasmic. A helical transmembrane segment spans residues 229 to 249 (FTGLICAFSWFMLSLPLLFLG). Residues 250-269 (EAGSLGFDCTESLVARYYPG) lie on the Extracellular side of the membrane. A helical membrane pass occupies residues 270 to 290 (PAACLALLLIILYAWSFSHFM). Residues 291-312 (DSLKNQVTVTARYFRRVPSQST) are Cytoplasmic-facing.

The protein belongs to the Epstein-Barr virus BILF1 protein family. In terms of assembly, interacts with host CXCR4 to form higher-order heterooligomers. Interacts with host Gi heterotrimer.

The protein localises to the host cell membrane. It localises to the host mitochondrion outer membrane. In terms of biological role, constitutively active, ligand-independent G protein-coupled receptor that has immunoevasive and oncogenic activities. Couples with the host inhibitory G protein (Gi) in order to disrupt the host chemokine signaling. As a consequence of its constitutive activity, mediates host CXCR4 inhibition. Enhances degradation of host major histocompatibility complex class I antigens via lysosomes, thereby modulating the antigen presentation to cytotoxic T cells. Targets selectively HLA-A, HLA-Band HLA-E molecules. Targets also newly synthesized MHC-I/peptide complexes en route to the host cell surface. Inhibits the host EIF2AK2/PKR phosphorylation. Displays tranforming activity. Utilizes its C-terminal tail to trigger host MAVS UFMylation via PARK2, resulting in selective MAVS removal from mitochondrial membranes and routing to lysosomes to prevent viral activation of the NLRP3 inflammasome. This chain is G-protein coupled receptor BILF1, found in Homo sapiens (Human).